The primary structure comprises 396 residues: Elongation factor Tu (396 aa).

The tr-type G domain occupies 10–205 (KPHVNIGTIG…AVDESIPDPV (196 aa)). Residues 19-26 (GHVDHGKT) are G1. Position 19-26 (19-26 (GHVDHGKT)) interacts with GTP. A Mg(2+)-binding site is contributed by Thr-26. The interval 62–66 (GITIN) is G2. Residues 83–86 (DAPG) form a G3 region. Residues 83-87 (DAPGH) and 138-141 (NKAD) each bind GTP. Positions 138–141 (NKAD) are G4. Residues 175–177 (SAL) form a G5 region.

This sequence belongs to the TRAFAC class translation factor GTPase superfamily. Classic translation factor GTPase family. EF-Tu/EF-1A subfamily. In terms of assembly, monomer.

The protein localises to the cytoplasm. The enzyme catalyses GTP + H2O = GDP + phosphate + H(+). Its function is as follows. GTP hydrolase that promotes the GTP-dependent binding of aminoacyl-tRNA to the A-site of ribosomes during protein biosynthesis. This is Elongation factor Tu from Mycolicibacterium vanbaalenii (strain DSM 7251 / JCM 13017 / BCRC 16820 / KCTC 9966 / NRRL B-24157 / PYR-1) (Mycobacterium vanbaalenii).